Reading from the N-terminus, the 486-residue chain is Arginine/agmatine antiporter (486 aa).

Helical transmembrane passes span 12 to 32 (LGAI…GIFS), 41 to 61 (AGAG…FFIA), 85 to 105 (GFGP…QIFG), 129 to 149 (NTIP…FIVL), 160 to 180 (IIGT…TAFA), 211 to 231 (STML…VMSA), 242 to 262 (ATLL…ILPF), 296 to 316 (VGLL…VAEI), 341 to 361 (LSLY…YFST), 367 to 387 (MLSI…AFLF), 418 to 438 (LWLI…LLAL), and 461 to 481 (EVTK…LFST).

It belongs to the amino acid-polyamine-organocation (APC) superfamily. Basic amino acid/polyamine antiporter (APA) (TC 2.A.3.2) family.

The protein resides in the cell inner membrane. Its function is as follows. Catalyzes the exchange of L-arginine for agmatine. The arginine uptake by the bacterium in the macrophage may be a virulence factor against the host innate immune response. The sequence is that of Arginine/agmatine antiporter (aaxC) from Chlamydia caviae (strain ATCC VR-813 / DSM 19441 / 03DC25 / GPIC) (Chlamydophila caviae).